Consider the following 482-residue polypeptide: Putative fatty acid desaturase 2-like protein FADS2B (482 aa).

The segment at 1–31 (MKFEEKCGDNGSIVGRNQSYPGEKHQPKGKP) is disordered. The Cytoplasmic segment spans residues 1 to 167 (MKFEEKCGDN…EAMNMFHANL (167 aa)). Residues 56 to 132 (LSMYTWLEIQ…LKPLLIGELA (77 aa)) enclose the Cytochrome b5 heme-binding domain. His-90 and His-113 together coordinate heme. A helical membrane pass occupies residues 168–188 (GFFFLHFVQILILEVLAWLIV). The Lumenal segment spans residues 189 to 190 (YH). A helical transmembrane segment spans residues 191–211 (FGSGWPVTMFISFLLTISQAS). Over 212–305 (SSFLQHDAGH…YEEQHLYFYK (94 aa)) the chain is Cytoplasmic. The Histidine box-1 signature appears at 217–221 (HDAGH). The Histidine box-2 motif lies at 254–258 (HFEQH). A helical transmembrane segment spans residues 306 to 326 (VWLPLFMPVYLKLPSMQAMYL). Over 327-343 (QRYWVCFSLQDITWVSS) the chain is Lumenal. Residues 344-364 (FYIYFITFGLYYGIFGTMLLI) form a helical membrane-spanning segment. Over 365–482 (YLVKFLESPW…AALWADAYYE (118 aa)) the chain is Cytoplasmic. Positions 421–425 (QIEHH) match the Histidine box-3 motif.

It belongs to the fatty acid desaturase type 1 family.

It localises to the endoplasmic reticulum membrane. The protein operates within lipid metabolism; polyunsaturated fatty acid biosynthesis. This Homo sapiens (Human) protein is Putative fatty acid desaturase 2-like protein FADS2B.